Consider the following 322-residue polypeptide: Thioredoxin reductase (322 aa).

Residues 11-14 (SGPA), 40-41 (IA), Gln-45, Asn-54, Val-87, and Cys-145 contribute to the FAD site. Cys-142 and Cys-145 are oxidised to a cystine. Ser-192 is subject to Phosphoserine. Phosphothreonine is present on Thr-278. The residue at position 279 (Ser-279) is a Phosphoserine. Residues Asp-288 and 295-297 (RQA) each bind FAD.

Belongs to the class-II pyridine nucleotide-disulfide oxidoreductase family. Homodimer. It depends on FAD as a cofactor.

It localises to the cytoplasm. The catalysed reaction is [thioredoxin]-dithiol + NADP(+) = [thioredoxin]-disulfide + NADPH + H(+). This is Thioredoxin reductase (trr1) from Schizosaccharomyces pombe (strain 972 / ATCC 24843) (Fission yeast).